We begin with the raw amino-acid sequence, 124 residues long: Histone H2B, embryonic (124 aa).

The disordered stretch occupies residues 1-31 (MAPTAQVAKKGSKKAVKGTKTAXGGKKRNRK). Residue serine 111 is glycosylated (O-linked (GlcNAc) serine). Lysine 119 is covalently cross-linked (Glycyl lysine isopeptide (Lys-Gly) (interchain with G-Cter in ubiquitin)).

The protein belongs to the histone H2B family. The nucleosome is a histone octamer containing two molecules each of H2A, H2B, H3 and H4 assembled in one H3-H4 heterotetramer and two H2A-H2B heterodimers. The octamer wraps approximately 147 bp of DNA. Post-translationally, monoubiquitination of Lys-119 gives a specific tag for epigenetic transcriptional activation and is also prerequisite for histone H3 'Lys-4' and 'Lys-79' methylation. GlcNAcylation at Ser-111 promotes monoubiquitination of Lys-119. It fluctuates in response to extracellular glucose, and associates with transcribed genes.

It is found in the nucleus. Its subcellular location is the chromosome. Its function is as follows. Core component of nucleosome. Nucleosomes wrap and compact DNA into chromatin, limiting DNA accessibility to the cellular machineries which require DNA as a template. Histones thereby play a central role in transcription regulation, DNA repair, DNA replication and chromosomal stability. DNA accessibility is regulated via a complex set of post-translational modifications of histones, also called histone code, and nucleosome remodeling. The chain is Histone H2B, embryonic from Strongylocentrotus purpuratus (Purple sea urchin).